The following is a 4960-amino-acid chain: Malformin synthetase mlfA (4960 aa).

The segment at 194 to 564 is adenylation 1; it reads ERHATNRPHS…CGRADTQVKL (371 aa). One can recognise a Carrier 1 domain in the interval 705-778; the sequence is SRLEQEVQLA…EAASLAEVQE (74 aa). Ser739 bears the O-(pantetheine 4'-phosphoryl)serine mark. Residues 816–1247 are condensation 1; sequence EDVFPCTTMQ…ALNTLSLLQA (432 aa). The interval 1275 to 1650 is adenylation 2; the sequence is DRWVTRQPEG…GRKDTQVKLR (376 aa). A Carrier 2 domain is found at 1777–1854; it reads TPASELERTL…HLAAEVGEPA (78 aa). Disordered stretches follow at residues 1855-1883 and 1917-1943; these read GQSASSASSTTEEGFTFSTPDDSSTNDGV and GGSSSNKTPSVSSSSSSSSSSKRKKNA. 2 stretches are compositionally biased toward low complexity: residues 1857–1881 and 1919–1936; these read SASSASSTTEEGFTFSTPDDSSTND and SSSNKTPSVSSSSSSSSS. Residues 1989 to 2404 form a condensation 2 region; it reads EDIYPATALQ…AVSCSDKETL (416 aa). The tract at residues 2427–2819 is adenylation 3; sequence RRTPHAPAVC…IGRRDGQLKL (393 aa). The 77-residue stretch at 2955–3031 folds into the Carrier 3 domain; that stretch reads RPVTSQEREM…QLICHINTIR (77 aa). Ser2992 is modified (O-(pantetheine 4'-phosphoryl)serine). 2 condensation regions span residues 3049-3464 and 3520-3889; these read VALA…FTFP and SGYV…EQLV. The tract at residues 3914 to 4304 is adenylation 4; that stretch reads HNSRQAVCAW…VGRKDNQIKF (391 aa). The Carrier 4 domain occupies 4438 to 4514; it reads MPSTAAERKM…DLSDQAKSLI (77 aa). The residue at position 4475 (Ser4475) is an O-(pantetheine 4'-phosphoryl)serine. Residues 4551–4878 form a condensation 5 region; it reads DVLPTTSFQH…LQTIVQHQNN (328 aa).

The protein belongs to the NRP synthetase family.

Its pathway is secondary metabolite biosynthesis. Nonribosomal peptide synthetase; part of the gene cluster that mediates the biosynthesis of malformins, cyclic pentapeptides with a disulfide bond between 2 consecutive cysteins, that show potential anti-tumor as well as antimalarial and antitrypanosomal properties. The nonribosomal peptide synthetase mlfA is responsible of the formation of the cyclic pentapeptide. The malformin biosynthesis clusters in malformin-producing fungi also contain enzymes involved in the formation of the disulfide bond between the two consecutive cysteins within malformins, in addition to additional tailoring enzymes such as methyltransferases or oxidoreductases. They are also composed of up to 4 major facilitator superfamily transporters, and transcription factors probably involved in the regulation of the expression of those clusters. The chain is Malformin synthetase mlfA from Aspergillus neoniger (strain CBS 115656).